The sequence spans 875 residues: Transcription factor tenR (875 aa).

Residues 16 to 44 (CSECRRRKIRCDRGFPCGPCRKSLPALSC) constitute a DNA-binding region (zn(2)-C6 fungal-type). Disordered regions lie at residues 54–73 (AASAPPRPHTAQHQPRPKVN), 136–172 (DHEKKESTNHSRARQGYPGSTETINPGSVSHSAGVNP), and 620–642 (PHEDGPRSIQSQISSHAGQTGSR). Polar residues-rich tracts occupy residues 153–168 (PGSTETINPGSVSHSA) and 627–642 (SIQSQISSHAGQTGSR).

It is found in the nucleus. Its function is as follows. Transcription factor that positively regulates the expression of the genes that mediate the biosynthesis of tenellin-type 2-pyridones, iron-chelating compounds involved in iron stress tolerance, competition with the natural competitor fungus Metarhizium robertsii and insect hosts infection. The polypeptide is Transcription factor tenR (Beauveria bassiana (strain ARSEF 2860) (White muscardine disease fungus)).